The sequence spans 729 residues: MNEQIIEINLNNLDEKYEFNKIAKQASGAVMYRQGKAVLIAAVAVDEKAVEEDFLPLTVQYMERSYAAAKIPGGFIKRETKPGDFETLTSRIVDRSLRPLFPKGFYYPVTISVMVVSSDSEVDMQVAALHAANAALYVSDISVQRSIAAVRVGKIEDELVLNPTLSQQDESVLDLLVVGSEQDIIMIEMRAIASEKIDDIEMDMIDPMMGGVPLILEHQECNEVDNEALVDAIAFAAKAIEEASAIYEKEFTPVMRTPLGLSLAEEKVDEELYAYIKENYSEAVAKAISHMAKSERSTELKKVRAQIMEALESEGKEADKELVSKVLDRYKTTVVRDMILDKGIRADGRGLDEVRPITIETNILPSVHGSCLFTRGQTQALVTATLGDKKDAQMFELITDKNTQSENFMVHYNFPGYSVGEAKFIGAPGRRELGHGNLAKRALEPVIPINYDGTIRLVSEVLESNGSSSMATICGGALALRAAEVDMVELVAGIAMGLVTDGERVAVLTDIMGLEDHDGDMDFKIAGTRNGITALQMDIKLGGIDLITLKVALEKAAQGKDHILDLMEEAEKKMESSQALPSTEHFSINPQKIADIIGKAGATIRDIIEKFEVSIDLDRDKGGVKLSGHDKEKVAAAKEHIEKIANAPVRKQMQYEVGKTYVGKVKKIVDFGIFVEMPDGFDALLHISKVAKERVNNLNERYHEGDDITVVVMEQKGKKVELATPEYLA.

Mg(2+)-binding residues include D516 and D522. A KH domain is found at 581–641 (PSTEHFSINP…EKVAAAKEHI (61 aa)). Positions 658–725 (GKTYVGKVKK…KGKKVELATP (68 aa)) constitute an S1 motif domain.

Belongs to the polyribonucleotide nucleotidyltransferase family. Mg(2+) is required as a cofactor.

The protein resides in the cytoplasm. The catalysed reaction is RNA(n+1) + phosphate = RNA(n) + a ribonucleoside 5'-diphosphate. Functionally, involved in mRNA degradation. Catalyzes the phosphorolysis of single-stranded polyribonucleotides processively in the 3'- to 5'-direction. This Sulfurovum sp. (strain NBC37-1) protein is Polyribonucleotide nucleotidyltransferase.